The chain runs to 279 residues: HTH-type transcriptional activator RhaS (279 aa).

The HTH araC/xylS-type domain occupies 175-273; sequence QALLGWLQNN…SQAPKSLRHQ (99 aa). 2 consecutive DNA-binding regions (H-T-H motif) follow at residues 192-213 and 240-263; these read GSLADRFSLPLRTLHRQLKQHT and ITTIAHACGFSDSNHFSTQFRKAF.

As to quaternary structure, binds DNA as a dimer.

The protein localises to the cytoplasm. In terms of biological role, activates expression of the rhaBAD and rhaT operons. This is HTH-type transcriptional activator RhaS from Pectobacterium carotovorum subsp. carotovorum (strain PC1).